We begin with the raw amino-acid sequence, 104 residues long: Co-chaperonin GroES 2 (104 aa).

This sequence belongs to the GroES chaperonin family. Heptamer of 7 subunits arranged in a ring. Interacts with the chaperonin GroEL.

The protein resides in the cytoplasm. Functionally, together with the chaperonin GroEL, plays an essential role in assisting protein folding. The GroEL-GroES system forms a nano-cage that allows encapsulation of the non-native substrate proteins and provides a physical environment optimized to promote and accelerate protein folding. GroES binds to the apical surface of the GroEL ring, thereby capping the opening of the GroEL channel. This is Co-chaperonin GroES 2 from Rhodopseudomonas palustris (strain ATCC BAA-98 / CGA009).